The primary structure comprises 325 residues: Glutarate 2-hydroxylase (325 aa).

Fe cation-binding residues include H160, D162, and H292.

The protein belongs to the glutarate hydroxylase family. In terms of assembly, homotetramer. Requires Fe(2+) as cofactor.

The catalysed reaction is glutarate + 2-oxoglutarate + O2 = (S)-2-hydroxyglutarate + succinate + CO2. It functions in the pathway amino-acid degradation. Its function is as follows. Acts as an alpha-ketoglutarate-dependent dioxygenase catalyzing hydroxylation of glutarate (GA) to L-2-hydroxyglutarate (L2HG). Functions in a L-lysine degradation pathway that proceeds via cadaverine, glutarate and L-2-hydroxyglutarate. The protein is Glutarate 2-hydroxylase of Escherichia coli O6:H1 (strain CFT073 / ATCC 700928 / UPEC).